A 283-amino-acid polypeptide reads, in one-letter code: ATP phosphoribosyltransferase (283 aa).

This sequence belongs to the ATP phosphoribosyltransferase family. Long subfamily. It depends on Mg(2+) as a cofactor.

The protein resides in the cytoplasm. It catalyses the reaction 1-(5-phospho-beta-D-ribosyl)-ATP + diphosphate = 5-phospho-alpha-D-ribose 1-diphosphate + ATP. It functions in the pathway amino-acid biosynthesis; L-histidine biosynthesis; L-histidine from 5-phospho-alpha-D-ribose 1-diphosphate: step 1/9. With respect to regulation, feedback inhibited by histidine. Its function is as follows. Catalyzes the condensation of ATP and 5-phosphoribose 1-diphosphate to form N'-(5'-phosphoribosyl)-ATP (PR-ATP). Has a crucial role in the pathway because the rate of histidine biosynthesis seems to be controlled primarily by regulation of HisG enzymatic activity. The polypeptide is ATP phosphoribosyltransferase (Bifidobacterium longum subsp. infantis (strain ATCC 15697 / DSM 20088 / JCM 1222 / NCTC 11817 / S12)).